A 206-amino-acid chain; its full sequence is Ribosomal RNA large subunit methyltransferase E (206 aa).

The S-adenosyl-L-methionine site is built by G60, W62, D80, D96, and D121. The active-site Proton acceptor is K161.

This sequence belongs to the class I-like SAM-binding methyltransferase superfamily. RNA methyltransferase RlmE family.

It localises to the cytoplasm. It carries out the reaction uridine(2552) in 23S rRNA + S-adenosyl-L-methionine = 2'-O-methyluridine(2552) in 23S rRNA + S-adenosyl-L-homocysteine + H(+). Functionally, specifically methylates the uridine in position 2552 of 23S rRNA at the 2'-O position of the ribose in the fully assembled 50S ribosomal subunit. This is Ribosomal RNA large subunit methyltransferase E from Saccharophagus degradans (strain 2-40 / ATCC 43961 / DSM 17024).